The primary structure comprises 373 residues: Indole glucosinolate O-methyltransferase 1 (373 aa).

Positions 217, 240, 260, 261, and 274 each coordinate S-adenosyl-L-homocysteine. The Proton acceptor role is filled by histidine 278.

It belongs to the class I-like SAM-binding methyltransferase superfamily. Cation-independent O-methyltransferase family. Interacts with B'GAMMA.

It functions in the pathway secondary metabolite biosynthesis. Functionally, involved in indole glucosinolate biosynthesis. Catalyzes methoxylation reactions of the glucosinolate indole ring. Converts the hydroxy intermediates 4-hydroxy-indol-3-yl-methylglucosinolate (4OH-I3M) and 1-hydroxy-indol-3-yl-methylglucosinolate (1OH-I3M) to 4-methoxy-indol-3-yl-methylglucosinolate (4MO-I3M) and 1-methoxy-indol-3-yl-methylglucosinolate (1MO-I3M), respectively. The chain is Indole glucosinolate O-methyltransferase 1 from Arabidopsis thaliana (Mouse-ear cress).